The sequence spans 86 residues: Large ribosomal subunit protein bL27 (86 aa).

It belongs to the bacterial ribosomal protein bL27 family.

The chain is Large ribosomal subunit protein bL27 from Christiangramia forsetii (strain DSM 17595 / CGMCC 1.15422 / KT0803) (Gramella forsetii).